A 303-amino-acid polypeptide reads, in one-letter code: UDP-N-acetylenolpyruvoylglucosamine reductase (303 aa).

Residues 29 to 196 (KIGGPADILI…LEAVLQLEQK (168 aa)) form the FAD-binding PCMH-type domain. The active site involves arginine 174. The active-site Proton donor is the serine 225. Glutamate 295 is an active-site residue.

Belongs to the MurB family. FAD is required as a cofactor.

Its subcellular location is the cytoplasm. It carries out the reaction UDP-N-acetyl-alpha-D-muramate + NADP(+) = UDP-N-acetyl-3-O-(1-carboxyvinyl)-alpha-D-glucosamine + NADPH + H(+). It functions in the pathway cell wall biogenesis; peptidoglycan biosynthesis. Cell wall formation. In Bacillus velezensis (strain DSM 23117 / BGSC 10A6 / LMG 26770 / FZB42) (Bacillus amyloliquefaciens subsp. plantarum), this protein is UDP-N-acetylenolpyruvoylglucosamine reductase.